The following is a 557-amino-acid chain: MVLSDIEIANSVTMEPISKVADQLGIDKETLCLYGKYKAKIDARQLVALKDKPDGKLILVTAISPTPAGEGKTTTSVGLVDALSAIGKKAVIALREPSLGPVFGVKGGAAGGGHAQVVPMEDINLHFTGDFHAIGVANNLLAALIDNHIHHGNSLGIDSRRITWKRVVDMNDRQLRHIVDGLQGKVNGVPREDGYDITVASEIMAILCLSENISDLKARLEKIIIGYNFQGEPVTAKDLKAGGALAALLKDAIHPNLVQTLEHTPALIHGGPFANIAHGCNSVLATKLALKYGDYAVTEAGFGADLGAEKFIDIKCRMSGLRPAAVVLVATIRALKMHGGVPKADLATENVQAVVDGLPNLDKHLANIQDVYGLPVVVAINKFPLDTDAELQAVYDACDKRGVDVVISDVWANGGAGGRELAEKVVALAEQDNQFRFVYNEDDSIETKLTKIVTKIYGGKGIKLTPTAKRELAELERLGFGNYPICMAKTQYSFSDDAKKLGAPTDFIVTISNLKVSAGAGFIVALTGAIMTMPGLPKVPASETIDIDEEGNITGLF.

An ATP-binding site is contributed by 66–73; the sequence is TPAGEGKT.

It belongs to the formate--tetrahydrofolate ligase family.

It carries out the reaction (6S)-5,6,7,8-tetrahydrofolate + formate + ATP = (6R)-10-formyltetrahydrofolate + ADP + phosphate. Its pathway is one-carbon metabolism; tetrahydrofolate interconversion. In Streptococcus pyogenes serotype M6 (strain ATCC BAA-946 / MGAS10394), this protein is Formate--tetrahydrofolate ligase 2.